We begin with the raw amino-acid sequence, 140 residues long: Methylglyoxal synthase (140 aa).

The 140-residue stretch at 1–140 (MKIALIAHDK…RGRKGEINGL (140 aa)) folds into the MGS-like domain. Substrate contacts are provided by residues histidine 8, lysine 12, 34-37 (TGTT), and 54-55 (SG). Aspartate 60 acts as the Proton donor/acceptor in catalysis. Residue histidine 87 coordinates substrate.

This sequence belongs to the methylglyoxal synthase family.

It catalyses the reaction dihydroxyacetone phosphate = methylglyoxal + phosphate. Catalyzes the formation of methylglyoxal from dihydroxyacetone phosphate. In Geobacillus sp. (strain WCH70), this protein is Methylglyoxal synthase.